A 1194-amino-acid polypeptide reads, in one-letter code: Immunoglobulin superfamily member 3 (1194 aa).

Residues 1 to 19 form the signal peptide; that stretch reads MKCFFPVLSCLAVLGVVSA. Ig-like C2-type domains are found at residues 20–138, 143–262, 276–386, 401–539, 545–661, 676–803, 813–945, and 949–1097; these read QRQV…AKMN, PDSL…WYAM, PTDK…KTVT, PIVV…VSIT, FAVT…WTRL, PVTK…EEVS, PDSR…TAVT, and PDAA…YRLT. The Extracellular portion of the chain corresponds to 20-1124; the sequence is QRQVTVQEGP…LQSLICSNDA (1105 aa). 2 cysteine pairs are disulfide-bonded: cysteine 42–cysteine 120 and cysteine 167–cysteine 246. Residue asparagine 43 is glycosylated (N-linked (GlcNAc...) asparagine). Residues 250 to 252 carry the EWI motif motif; sequence EWI. Cysteine 302 and cysteine 376 are joined by a disulfide. Residue asparagine 418 is glycosylated (N-linked (GlcNAc...) asparagine). Intrachain disulfides connect cysteine 432–cysteine 511, cysteine 566–cysteine 645, cysteine 701–cysteine 782, cysteine 838–cysteine 918, and cysteine 974–cysteine 1080. N-linked (GlcNAc...) asparagine glycosylation is present at asparagine 842. The tract at residues 997-1030 is disordered; sequence GGGKRGSLGIDEQEEEEEEEDISQEEDSEDPTER. Residues 1007 to 1026 show a composition bias toward acidic residues; that stretch reads DEQEEEEEEEDISQEEDSED. N-linked (GlcNAc...) asparagine glycosylation occurs at asparagine 1077. The helical transmembrane segment at 1125-1145 threads the bilayer; sequence LFYFVFFYPFPIFGILIITIL. The Cytoplasmic portion of the chain corresponds to 1146-1194; that stretch reads LVRFKSRNSSKNSEGKNGVPLLWIKEPHLNYSPTCLEPPVLSIHPGAID.

Expressed in the lacrimal duct and lacrimal gland.

The protein localises to the membrane. The protein is Immunoglobulin superfamily member 3 (Igsf3) of Mus musculus (Mouse).